The sequence spans 488 residues: Probable phenylalanine--tRNA ligase alpha subunit (488 aa).

Residues 1–146 (MSIEQDILNL…KRKLVDINKK (146 aa)) form a contains the major tRNA-Phe binding sites region. L-phenylalanine-binding positions include threonine 315, 363–365 (QVE), and tyrosine 403. Glutamate 405 is a Mg(2+) binding site. Phenylalanine 429 lines the L-phenylalanine pocket.

This sequence belongs to the class-II aminoacyl-tRNA synthetase family. Phe-tRNA synthetase alpha subunit type 2 subfamily. In terms of assembly, tetramer of two alpha and two beta subunits. Mg(2+) is required as a cofactor.

It is found in the cytoplasm. It carries out the reaction tRNA(Phe) + L-phenylalanine + ATP = L-phenylalanyl-tRNA(Phe) + AMP + diphosphate + H(+). The chain is Probable phenylalanine--tRNA ligase alpha subunit from Enterocytozoon bieneusi (strain H348) (Microsporidian parasite).